We begin with the raw amino-acid sequence, 358 residues long: CCAAT/enhancer-binding protein alpha (358 aa).

The tract at residues 1-55 (MESADFYEAEPRPPMSSHLQSPPHAPSNAAFGFPRGAGPAPPPAPPAAPEPLGGI) is disordered. The required to repress E2F1:TFDP1-mediated transcription, to inhibit cell cycle and to induce adipocyte differentiation stretch occupies residues 1-70 (MESADFYEAE…SIDISAYIDP (70 aa)). Positions 29–38 (AAFGFPRGAG) are enriched in low complexity. Over residues 39-49 (PAPPPAPPAAP) the composition is skewed to pro residues. The tract at residues 54–72 (GICEHETSIDISAYIDPAA) is required for interaction with TRIB1. The tract at residues 126 to 200 (PPGYGCAAAG…HASPAHLAAP (75 aa)) is required to induce adipocyte differentiation. Position 159 is an N6-acetyllysine; alternate (Lys159). Lys159 is covalently cross-linked (Glycyl lysine isopeptide (Lys-Gly) (interchain with G-Cter in SUMO); alternate). Residue Lys159 forms a Glycyl lysine isopeptide (Lys-Gly) (interchain with G-Cter in SUMO2); alternate linkage. Disordered stretches follow at residues 176–195 (LFPYQPPPPPPPPHPHASPA) and 213–310 (TMHL…NVET). Over residues 179–191 (YQPPPPPPPPHPH) the composition is skewed to pro residues. The segment at 180–194 (QPPPPPPPPHPHASP) is required to functionally cooperate with SREBF1 in promoter activation. Phosphoserine is present on Ser193. Positions 220-234 (HPTPPPTPVPSPHPA) are enriched in pro residues. Phosphothreonine; by GSK3 is present on residues Thr222 and Thr226. At Ser230 the chain carries Phosphoserine; by GSK3. Positions 240 to 358 (AGLPGPGGSL…SLVKAMGNCA (119 aa)) are interaction with FOXO1. Gly residues predominate over residues 261-271 (TGGGGGGGAGA). Residues 276 to 292 (KSVDKNSNEYRVRRERN) show a composition bias toward basic and acidic residues. In terms of domain architecture, bZIP spans 282-345 (SNEYRVRRER…DTLRGIFRQL (64 aa)). A DNA-binding region spans residues 285 to 300 (YRVRRERNNIAVRKSR). The segment at 286–313 (RVRRERNNIAVRKSRDKAKQRNVETQQK) is basic motif. Residues 317 to 345 (LTSDNDRLRKRVEQLSRELDTLRGIFRQL) form a leucine-zipper region.

This sequence belongs to the bZIP family. C/EBP subfamily. As to quaternary structure, binds DNA as a homodimer and as a heterodimer. Can form stable heterodimers with CEBPB, CEBPD, CEBPE and CEBPG. Can form stable homodimers (also isoform 2 and isoform 3 dimers) and heterodimers with CEBPB (with isoform 2 and isoform 3) and CEBPG. Interacts with PRDM16. Interacts with UBN1. Interacts with ZNF638; this interaction increases transcriptional activation. Interacts with the complex TFDP2:E2F1; the interaction prevents CEBPA binding to target gene promoters and represses its transcriptional activity. Interacts with RB1. Interacts (when phosphorylated at Ser-193) with CDK2, CDK4, E2F4 and SMARCA2. Interacts with SREBPF1. Interacts with FOXO1 (via the Fork-head domain); the interaction increases when FOXO1 is deacetylated. Interacts with SIX1. Interacts (via recognition sequence) with TRIB1. Interacts with TAF1A and UBTF. In terms of assembly, interacts with NPM1. Sumoylated, sumoylation blocks the inhibitory effect on cell proliferation by disrupting the interaction with SMARCA2. Post-translationally, phosphorylation at Ser-193 is required for interaction with CDK2, CDK4 and SWI/SNF complex leading to cell cycle inhibition. Dephosphorylated at Ser-193 by protein phosphatase 2A (PP2A) through PI3K/AKT signaling pathway regulation. Phosphorylation at Thr-222 and Thr-226 by GSK3 is constitutive in adipose tissue and lung. In liver, both Thr-222 and Thr-226 are phosphorylated only during feeding but not during fasting. Phosphorylation of the GSK3 consensus sites selectively decreases transactivation activity on IRE-controlled promoters. In terms of processing, ubiquitinated by COP1 upon interaction with TRIB1. In terms of tissue distribution, isoform 2 and isoform 3 are expressed in liver (at protein level).

It is found in the nucleus. Its subcellular location is the nucleolus. Its function is as follows. Transcription factor that coordinates proliferation arrest and the differentiation of myeloid progenitors, adipocytes, hepatocytes, and cells of the lung and the placenta. Binds directly to the consensus DNA sequence 5'-T[TG]NNGNAA[TG]-3' acting as an activator on distinct target genes. During early embryogenesis, plays essential and redundant functions with CEBPB. Essential for the transition from common myeloid progenitors (CMP) to granulocyte/monocyte progenitors (GMP). Critical for the proper development of the liver and the lung. Necessary for terminal adipocyte differentiation, is required for postnatal maintenance of systemic energy homeostasis and lipid storage. To regulate these different processes at the proper moment and tissue, interplays with other transcription factors and modulators. Down-regulates the expression of genes that maintain cells in an undifferentiated and proliferative state through E2F1 repression, which is critical for its ability to induce adipocyte and granulocyte terminal differentiation. Reciprocally E2F1 blocks adipocyte differentiation by binding to specific promoters and repressing CEBPA binding to its target gene promoters. Proliferation arrest also depends on a functional binding to SWI/SNF complex. In liver, regulates gluconeogenesis and lipogenesis through different mechanisms. To regulate gluconeogenesis, functionally cooperates with FOXO1 binding to IRE-controlled promoters and regulating the expression of target genes such as PCK1 or G6PC1. To modulate lipogenesis, interacts and transcriptionally synergizes with SREBF1 in promoter activation of specific lipogenic target genes such as ACAS2. In adipose tissue, seems to act as FOXO1 coactivator accessing to ADIPOQ promoter through FOXO1 binding sites. Functionally, can act as dominant-negative. Binds DNA and have transctivation activity, even if much less efficiently than isoform 2. Does not inhibit cell proliferation. Directly and specifically enhances ribosomal DNA transcription interacting with RNA polymerase I-specific cofactors and inducing histone acetylation. The protein is CCAAT/enhancer-binding protein alpha of Rattus norvegicus (Rat).